We begin with the raw amino-acid sequence, 496 residues long: Transcription factor CP2 (496 aa).

The region spanning 61–300 (ENKILPFQYV…SPGFNSSHSS (240 aa)) is the Grh/CP2 DB domain. A DNA-binding region spans residues 133 to 386 (EHQQLEGWRW…LFNALKGRMV (254 aa)). Disordered regions lie at residues 238–268 (FKPKGADRKQKTDREKMEKRTPHEKEKYQPS) and 296–327 (SSHSSFSIGEGNGSPNHQPEPPPPIADNLLPT). A compositionally biased stretch (basic and acidic residues) spans 241-265 (KGADRKQKTDREKMEKRTPHEKEKY).

It belongs to the grh/CP2 family. CP2 subfamily. In terms of assembly, component of the SSP (stage selector protein) complex, which appears to be a heteromer of TFCP2 and 2 copies of NFE4. Expressed in the epiblast at the pre-primitive streak stage. At the primitive streak stage, expressed in the extending primitive streak and in the prospective neural plate. At stages 7 and 8, expressed in the neural folds, somites and in the regressing primitive streak. At stage 12, ubiquitously expressed in the whole embryo.

The protein localises to the nucleus. Functionally, binds the B-response element 5'-CAAGTCCAGGCAAGT-3' of the ENS1/ERNI promoter. May be the major transcription activator thus being essential for its expression. This chain is Transcription factor CP2 (TFCP2), found in Gallus gallus (Chicken).